The sequence spans 185 residues: Elongation factor P (185 aa).

This sequence belongs to the elongation factor P family.

It localises to the cytoplasm. Its pathway is protein biosynthesis; polypeptide chain elongation. Involved in peptide bond synthesis. Stimulates efficient translation and peptide-bond synthesis on native or reconstituted 70S ribosomes in vitro. Probably functions indirectly by altering the affinity of the ribosome for aminoacyl-tRNA, thus increasing their reactivity as acceptors for peptidyl transferase. In Desulfitobacterium hafniense (strain Y51), this protein is Elongation factor P.